The following is a 304-amino-acid chain: MSGLQVLLVAGTHGNEINGPWLLDQWSQTPELINTHGVGVVPVIGNPEALALGRRYLDCDLNRSFRLDLLRSPSILDREVVRAKQLLSFFGPEGSTPCQIVIDLHSTTSAMGSTLVVYGRRSVDLALAALIQARLGLPIYLHDGDDDQQGFLVERWPCGLVIEIGPVPQGLLKARIIEQTRLAVQACLEALSSVASGSPTYPDEFVVHSHLGSLDLPRDALGQPAACVHPSLQGRDWQPLQMGAPLFLWPDGEVFRFEGRDSPIPVFINEAAYVEKHIAMSLTCREVCPLPEQWQGALQQLVDC.

Residues His-13 and Glu-16 each contribute to the Zn(2+) site. Residues Arg-55 and 62–63 (NR) each bind substrate. His-105 contacts Zn(2+). Substrate contacts are provided by Glu-163 and Tyr-273.

Belongs to the AspA/AstE family. Aspartoacylase subfamily. Zn(2+) serves as cofactor.

The catalysed reaction is an N-acyl-L-aspartate + H2O = a carboxylate + L-aspartate. In Prochlorococcus marinus (strain MIT 9313), this protein is Probable aspartoacylase.